Here is a 182-residue protein sequence, read N- to C-terminus: NADH-dependent FAD reductase (182 aa).

Asp16 contacts NAD(+). FAD is bound by residues 47–48, 62–64, and His98; these read NS and CVG. NAD(+) is bound at residue His143.

Belongs to the non-flavoprotein flavin reductase family. Homodimer.

The catalysed reaction is FADH2 + NAD(+) = FAD + NADH + 2 H(+). The protein operates within antibiotic biosynthesis. With respect to regulation, the SgcE6-SgcC hydroxylation activity decreases in the presence of excess FAD. In terms of biological role, reductase component of a two-component system involved in the biosynthesis of the enediyne antitumor antibiotic C-1027. SgcE6 provides the FADH(2) required by both the halogenase SgcC3 and the monooxygenase SgcC through free diffusion. Accepts only NADH and FAD as substrates. This chain is NADH-dependent FAD reductase, found in Streptomyces globisporus.